The sequence spans 372 residues: Probable dual-specificity RNA methyltransferase RlmN (372 aa).

Glu-106 functions as the Proton acceptor in the catalytic mechanism. Residues 112–359 (YPQRNTVCIS…SCTVRDTRGR (248 aa)) enclose the Radical SAM core domain. Cys-119 and Cys-365 are disulfide-bonded. Residues Cys-126, Cys-130, and Cys-133 each contribute to the [4Fe-4S] cluster site. Residues 186–187 (GE), Ser-220, 243–245 (SLH), and Asn-322 each bind S-adenosyl-L-methionine. Cys-365 (S-methylcysteine intermediate) is an active-site residue.

It belongs to the radical SAM superfamily. RlmN family. [4Fe-4S] cluster serves as cofactor.

It localises to the cytoplasm. It catalyses the reaction adenosine(2503) in 23S rRNA + 2 reduced [2Fe-2S]-[ferredoxin] + 2 S-adenosyl-L-methionine = 2-methyladenosine(2503) in 23S rRNA + 5'-deoxyadenosine + L-methionine + 2 oxidized [2Fe-2S]-[ferredoxin] + S-adenosyl-L-homocysteine. It carries out the reaction adenosine(37) in tRNA + 2 reduced [2Fe-2S]-[ferredoxin] + 2 S-adenosyl-L-methionine = 2-methyladenosine(37) in tRNA + 5'-deoxyadenosine + L-methionine + 2 oxidized [2Fe-2S]-[ferredoxin] + S-adenosyl-L-homocysteine. Its function is as follows. Specifically methylates position 2 of adenine 2503 in 23S rRNA and position 2 of adenine 37 in tRNAs. The chain is Probable dual-specificity RNA methyltransferase RlmN from Mycolicibacterium smegmatis (strain ATCC 700084 / mc(2)155) (Mycobacterium smegmatis).